Here is a 105-residue protein sequence, read N- to C-terminus: Large ribosomal subunit protein uL24 (105 aa).

Belongs to the universal ribosomal protein uL24 family. As to quaternary structure, part of the 50S ribosomal subunit.

One of two assembly initiator proteins, it binds directly to the 5'-end of the 23S rRNA, where it nucleates assembly of the 50S subunit. In terms of biological role, one of the proteins that surrounds the polypeptide exit tunnel on the outside of the subunit. This chain is Large ribosomal subunit protein uL24, found in Parvibaculum lavamentivorans (strain DS-1 / DSM 13023 / NCIMB 13966).